Reading from the N-terminus, the 247-residue chain is V-type proton ATPase subunit D (247 aa).

Belongs to the V-ATPase D subunit family. V-ATPase is a heteromultimeric enzyme made up of two complexes: the ATP-hydrolytic V1 complex and the proton translocation V0 complex. The V1 complex consists of three catalytic AB heterodimers that form a heterohexamer, three peripheral stalks each consisting of EG heterodimers, one central rotor including subunits D and F, and the regulatory subunits C and H. The proton translocation complex V0 consists of the proton transport subunit a, a ring of proteolipid subunits c9c'', rotary subunit d, subunits e and f, and the accessory subunits ATP6AP1/Ac45 and ATP6AP2/PRR. Interacts with SNX10. In terms of tissue distribution, expressed in brain (at protein level). Present in tissues active in secretion. Amounts elevated in brain, kidney and testis.

The protein localises to the membrane. It is found in the cytoplasmic vesicle. The protein resides in the clathrin-coated vesicle membrane. Its subcellular location is the cytoplasm. It localises to the cytoskeleton. The protein localises to the microtubule organizing center. It is found in the centrosome. The protein resides in the cell projection. Its subcellular location is the cilium. In terms of biological role, subunit of the V1 complex of vacuolar(H+)-ATPase (V-ATPase), a multisubunit enzyme composed of a peripheral complex (V1) that hydrolyzes ATP and a membrane integral complex (V0) that translocates protons. V-ATPase is responsible for acidifying and maintaining the pH of intracellular compartments and in some cell types, is targeted to the plasma membrane, where it is responsible for acidifying the extracellular environment. May play a role in cilium biogenesis through regulation of the transport and the localization of proteins to the cilium. This chain is V-type proton ATPase subunit D (ATP6V1D), found in Bos taurus (Bovine).